Consider the following 368-residue polypeptide: tRNA/tmRNA (uracil-C(5))-methyltransferase (368 aa).

Residues Gln190, Tyr218, Asn223, Glu239, and Asp301 each contribute to the S-adenosyl-L-methionine site. The active-site Nucleophile is the Cys326. Glu360 functions as the Proton acceptor in the catalytic mechanism.

This sequence belongs to the class I-like SAM-binding methyltransferase superfamily. RNA M5U methyltransferase family. TrmA subfamily.

It catalyses the reaction uridine(54) in tRNA + S-adenosyl-L-methionine = 5-methyluridine(54) in tRNA + S-adenosyl-L-homocysteine + H(+). It carries out the reaction uridine(341) in tmRNA + S-adenosyl-L-methionine = 5-methyluridine(341) in tmRNA + S-adenosyl-L-homocysteine + H(+). In terms of biological role, dual-specificity methyltransferase that catalyzes the formation of 5-methyluridine at position 54 (m5U54) in all tRNAs, and that of position 341 (m5U341) in tmRNA (transfer-mRNA). The polypeptide is tRNA/tmRNA (uracil-C(5))-methyltransferase (Photobacterium profundum (strain SS9)).